The following is a 785-amino-acid chain: E3 UFM1-protein ligase 1 homolog (785 aa).

Over residues 396–416 (MKHQDVIPDKESAENKADKRD) the composition is skewed to basic and acidic residues. Residues 396–473 (MKHQDVIPDK…KSAGGKKGAK (78 aa)) form a disordered region. The span at 439-449 (KSTKKHARGHR) shows a compositional bias: basic residues.

Belongs to the UFL1 family.

Its function is as follows. E3 UFM1-protein ligase that mediates ufmylation of target proteins. This is E3 UFM1-protein ligase 1 homolog from Culex quinquefasciatus (Southern house mosquito).